An 855-amino-acid polypeptide reads, in one-letter code: RE1-silencing transcription factor (855 aa).

The C2H2-type 1 zinc finger occupies 141–163 (FFCKPCQYQGENEQEFIVHIRTH). The tract at residues 172 to 199 (NGGDSDEDLSADAGPQTSVPNAESAESN) is disordered. Positions 186–199 (PQTSVPNAESAESN) are enriched in polar residues. 7 C2H2-type zinc fingers span residues 204-226 (IRCE…LKHH), 236-258 (FKCT…LRNH), 264-286 (FTCS…IRTH), 292-314 (FQCI…MRTH), 320-343 (FKCD…RQVH), 349-371 (LSCP…VELH), and 377-400 (FLCP…KSRH). The tract at residues 458 to 811 (NAVVETEKSS…ETPTEERDAS (354 aa)) is disordered. Basic and acidic residues-rich tracts occupy residues 462-472 (ETEKSSKKNMD), 481-496 (NEKK…EKTA), and 504-535 (AVKD…EKAL). Over residues 548 to 569 (SSVQQQSDDCEQTQHTPQQNET) the composition is skewed to polar residues. Residues 570 to 580 (QENRPEKENRS) show a composition bias toward basic and acidic residues. A compositionally biased stretch (basic residues) spans 594-604 (QTKKPCKKQTK). Residues 628 to 638 (RKAENPAEPKQ) are compositionally biased toward basic and acidic residues. Residues 639 to 648 (RIKRTKKKKD) show a composition bias toward basic residues. A compositionally biased stretch (polar residues) spans 652–662 (PTTSEANQTNP). Basic and acidic residues-rich tracts occupy residues 711–721 (PAVEDVQRPLE) and 799–811 (KLPE…RDAS). A C2H2-type 9 zinc finger spans residues 818–840 (HTCIFCDRSFALEMDYRKHLNRH).

It localises to the nucleus. It is found in the cytoplasm. Functionally, transcriptional repressor which binds neuron-restrictive silencer element (NRSE) and represses neuronal gene transcription in non-neuronal cells. This Danio rerio (Zebrafish) protein is RE1-silencing transcription factor (rest).